A 35-amino-acid chain; its full sequence is Unknown protein 14 from 2D-PAGE (35 aa).

The segment at 1–35 (VVXXQTLXDXRGIYGDQGSIGPXXIXGLQGDRDAD) is disordered.

The sequence is that of Unknown protein 14 from 2D-PAGE from Bombyx mori (Silk moth).